Here is a 209-residue protein sequence, read N- to C-terminus: Octanoyltransferase (209 aa).

The 180-residue stretch at 30–209 (DHEPEIIYLV…IQTEFNKIFK (180 aa)) folds into the BPL/LPL catalytic domain. Substrate-binding positions include 69–76 (RGGKFTFH), 143–145 (AIG), and 156–158 (GVA). Cys-174 serves as the catalytic Acyl-thioester intermediate.

This sequence belongs to the LipB family.

The protein resides in the cytoplasm. The catalysed reaction is octanoyl-[ACP] + L-lysyl-[protein] = N(6)-octanoyl-L-lysyl-[protein] + holo-[ACP] + H(+). The protein operates within protein modification; protein lipoylation via endogenous pathway; protein N(6)-(lipoyl)lysine from octanoyl-[acyl-carrier-protein]: step 1/2. Catalyzes the transfer of endogenously produced octanoic acid from octanoyl-acyl-carrier-protein onto the lipoyl domains of lipoate-dependent enzymes. Lipoyl-ACP can also act as a substrate although octanoyl-ACP is likely to be the physiological substrate. This is Octanoyltransferase from Rickettsia africae (strain ESF-5).